The following is a 1294-amino-acid chain: ATPase PglY (1294 aa).

Positions Thr1205–Ala1263 are disordered. Residues Asp1228 to Pro1244 show a composition bias toward polar residues. Residues Thr1252–Ala1263 are compositionally biased toward low complexity.

Functionally, BREX systems (bacteriophage exclusion) provide immunity against bacteriophage. Part of a type 2 BREX system. Previously called the phage growth limitation (Pgl) system, it confers protection against bacteriophage phiC31. The bacteria allows one cycle of phage infection, but subsequent cycles are impaired, protecting the original bacterial colony. The system undergoes high rates (10(-3) to 10(-4)) of phase reversion, i.e. loss and regain of phiC31 resistance. When the pglW-pglX-pglY-pglZ genes are transformed into a susceptible S.lividans (strain 1326) they confer resistance to infection by phage phiC31 and phiBT1; all 4 genes are necessary. Hydrolyzes ATP but not AMP, ADP, GMP, GDP or GTP; activity is inhibited by the non-hydrolyzable ATP analog 5-adenylyl beta,gamma-imidodiphosphate. The chain is ATPase PglY from Streptomyces coelicolor (strain ATCC BAA-471 / A3(2) / M145).